The sequence spans 716 residues: MTMFNKIVKEFQWGQHKVRLETGEIARQASGAVIVDVEDTVVLATVVGARTAKPGQDFFPLTVDYLEKTYAAGKIPGGFFRREGRPSEGETLISRLIDRPLRPLFPEGFYNEVQVVIHVLSLNPEIPADIPALIGASAALAVSGLPFNGPVGAARVAYINNEYVLNPTRPQMKESALDLIVAGTERAVLMVESEAQQLSEEVMLGGVVFGHEQMQIAIDAIHDLVREGGKPEWDWQPAAKNEPLIARVTELAQADLLAAYQLRDKQARSAKLKEIYAATSAKLEEDAAAGGTVAADKATVGNVLFDIEAKIVRTQILNGEPRIDGRDTRTVRPIEIRTGVLPRTHGSALFTRGETQALVVATLGTKGDEQNIDALEGEYRERFMLHYNMPPFATGETGRVGSPKRREIGHGRLAKRALAACLPSADEFGYSIRVVSEITESNGSSSMASVCGGCLALMDAGVPMKAHVAGIAMGLILEGNKFAVLTDILGDEDHLGDMDFKVAGTEQGVTALQMDIKIQGITREIMQVALAQAKEGRLHILGKMTSAVSGANTVLSDYAPRMITIKINPEKIRDVIGKGGSVIRALTEETGTTIDISDDGVVTIASTSSEGMAEAKKRIENITLEVEVGQVYEGTVLKLLDFGAIVNILPGKDGLLHISEIANERIKDINDYLKDGQQVKVKVIQTDEKGRVRLSAKALLNDAANGAPQGEPTPQQ.

Residues aspartate 493 and aspartate 499 each contribute to the Mg(2+) site. The KH domain occupies proline 560–isoleucine 619. The S1 motif domain occupies glycine 629–lysine 697.

This sequence belongs to the polyribonucleotide nucleotidyltransferase family. Mg(2+) is required as a cofactor.

It is found in the cytoplasm. It carries out the reaction RNA(n+1) + phosphate = RNA(n) + a ribonucleoside 5'-diphosphate. Its function is as follows. Involved in mRNA degradation. Catalyzes the phosphorolysis of single-stranded polyribonucleotides processively in the 3'- to 5'-direction. The polypeptide is Polyribonucleotide nucleotidyltransferase (Paraburkholderia xenovorans (strain LB400)).